A 344-amino-acid polypeptide reads, in one-letter code: Oxygen sensor histidine kinase NreB (344 aa).

[4Fe-4S] cluster-binding residues include cysteine 58, cysteine 61, cysteine 73, and cysteine 76. In terms of domain architecture, Histidine kinase spans 152–344 (RISRELHDSV…GTNVTLNIPI (193 aa)). Histidine 158 is subject to Phosphohistidine; by autocatalysis.

Requires [4Fe-4S] cluster as cofactor. Autophosphorylated.

The protein localises to the cytoplasm. The catalysed reaction is ATP + protein L-histidine = ADP + protein N-phospho-L-histidine.. Member of the two-component regulatory system NreB/NreC involved in the control of dissimilatory nitrate/nitrite reduction in response to oxygen. NreB functions as a direct oxygen sensor histidine kinase which is autophosphorylated, in the absence of oxygen, probably at the conserved histidine residue, and transfers its phosphate group probably to a conserved aspartate residue of NreC. NreB/NreC activates the expression of the nitrate (narGHJI) and nitrite (nir) reductase operons, as well as the putative nitrate transporter gene narT. The protein is Oxygen sensor histidine kinase NreB (nreB) of Staphylococcus aureus (strain JH1).